A 196-amino-acid polypeptide reads, in one-letter code: dTTP/UTP pyrophosphatase (196 aa).

The active-site Proton acceptor is Asp-72.

Belongs to the Maf family. YhdE subfamily. A divalent metal cation is required as a cofactor.

It localises to the cytoplasm. The catalysed reaction is dTTP + H2O = dTMP + diphosphate + H(+). The enzyme catalyses UTP + H2O = UMP + diphosphate + H(+). Functionally, nucleoside triphosphate pyrophosphatase that hydrolyzes dTTP and UTP. May have a dual role in cell division arrest and in preventing the incorporation of modified nucleotides into cellular nucleic acids. In Chlamydia trachomatis serovar L2 (strain ATCC VR-902B / DSM 19102 / 434/Bu), this protein is dTTP/UTP pyrophosphatase.